The sequence spans 160 residues: Cytochrome b6-f complex subunit 4 (160 aa).

3 consecutive transmembrane segments (helical) span residues 36 to 56, 95 to 115, and 131 to 151; these read LLYI…GLAV, LLGV…PFIE, and AVFL…TFPI.

It belongs to the cytochrome b family. PetD subfamily. The 4 large subunits of the cytochrome b6-f complex are cytochrome b6, subunit IV (17 kDa polypeptide, petD), cytochrome f and the Rieske protein, while the 4 small subunits are petG, petL, petM and petN. The complex functions as a dimer.

It localises to the plastid. Its subcellular location is the cyanelle thylakoid membrane. In terms of biological role, component of the cytochrome b6-f complex, which mediates electron transfer between photosystem II (PSII) and photosystem I (PSI), cyclic electron flow around PSI, and state transitions. This Cyanophora paradoxa protein is Cytochrome b6-f complex subunit 4.